An 882-amino-acid chain; its full sequence is Valine--tRNA ligase (882 aa).

Residues 50 to 60 (PNVTGKLHLGH) carry the 'HIGH' region motif. Residues 526–530 (KMSKS) carry the 'KMSKS' region motif. ATP is bound at residue Lys529. A coiled-coil region spans residues 810 to 881 (LEALIDLDLE…VLERIETLKE (72 aa)).

Belongs to the class-I aminoacyl-tRNA synthetase family. ValS type 1 subfamily. As to quaternary structure, monomer.

It localises to the cytoplasm. It catalyses the reaction tRNA(Val) + L-valine + ATP = L-valyl-tRNA(Val) + AMP + diphosphate. Functionally, catalyzes the attachment of valine to tRNA(Val). As ValRS can inadvertently accommodate and process structurally similar amino acids such as threonine, to avoid such errors, it has a 'posttransfer' editing activity that hydrolyzes mischarged Thr-tRNA(Val) in a tRNA-dependent manner. The chain is Valine--tRNA ligase from Listeria innocua serovar 6a (strain ATCC BAA-680 / CLIP 11262).